The following is a 353-amino-acid chain: Ubiquinol oxidase 2, mitochondrial (353 aa).

The N-terminal 21 residues, 1–21 (MSQLITKAALRVLLVCGRGNC), are a transit peptide targeting the mitochondrion. A helical membrane pass occupies residues 178 to 198 (AMMLETVAAVPGMVGGMLLHL). The Fe cation site is built by glutamate 182, glutamate 221, and histidine 224. The chain crosses the membrane as a helical span at residues 240–260 (LLVMLVQGIFFNSFFVCYVIS). Fe cation is bound by residues glutamate 272, glutamate 323, and histidine 326.

It belongs to the alternative oxidase family. Homodimer; disulfide-linked. Fe cation is required as a cofactor. Maximally expressed in dry seeds. Detected in roots, stems and leaves.

It is found in the mitochondrion inner membrane. The enzyme catalyses 2 a ubiquinol + O2 = 2 a ubiquinone + 2 H2O. Functionally, catalyzes the cyanide-resistant oxidation of ubiquinol and the reduction of molecular oxygen to water, but does not translocate protons and consequently is not linked to oxidative phosphorylation. May increase respiration when the cytochrome respiratory pathway is restricted, or in response to low temperatures. The protein is Ubiquinol oxidase 2, mitochondrial (AOX2) of Arabidopsis thaliana (Mouse-ear cress).